The following is a 546-amino-acid chain: Parathyroid hormone 2 receptor (546 aa).

An N-terminal signal peptide occupies residues methionine 1–alanine 24. Residues aspartate 27–tyrosine 143 lie on the Extracellular side of the membrane. N-linked (GlcNAc...) asparagine glycosylation is found at asparagine 51, asparagine 106, asparagine 116, and asparagine 121. A helical transmembrane segment spans residues isoleucine 144–phenylalanine 167. Topologically, residues arginine 168–arginine 174 are cytoplasmic. The chain crosses the membrane as a helical span at residues asparagine 175–valine 194. Topologically, residues lysine 195–lysine 235 are extracellular. Residues isoleucine 236 to tyrosine 258 traverse the membrane as a helical segment. Residues leucine 259–tyrosine 273 are Cytoplasmic-facing. A helical transmembrane segment spans residues leucine 274–alanine 295. The Extracellular segment spans residues arginine 296–tryptophan 313. A helical membrane pass occupies residues isoleucine 314–valine 334. The Cytoplasmic segment spans residues arginine 335 to serine 361. The chain crosses the membrane as a helical span at residues threonine 362–proline 380. Residues histidine 381 to arginine 391 lie on the Extracellular side of the membrane. A helical membrane pass occupies residues methionine 392–asparagine 414. At glycine 415–isoleucine 546 the chain is on the cytoplasmic side. The segment at serine 497–isoleucine 546 is disordered. Composition is skewed to basic and acidic residues over residues proline 506–aspartate 519 and glutamate 537–isoleucine 546.

The protein belongs to the G-protein coupled receptor 2 family. In terms of assembly, binds to TIPF39/TIP39.

Its subcellular location is the cell membrane. Functionally, this is a specific receptor for parathyroid hormone. The activity of this receptor is mediated by G proteins which activate adenylyl cyclase. PTH2R may be responsible for PTH effects in a number of physiological systems. It may play a significant role in pancreatic function. PTH2R presence in neurons indicates that it may function as a neurotransmitter receptor. In Mus musculus (Mouse), this protein is Parathyroid hormone 2 receptor (Pth2r).